The sequence spans 1331 residues: Contactin-associated protein-like 2 (1331 aa).

The N-terminal stretch at 1–27 (MLAAPRAGCGAALLLWIVSSCLCRAWT) is a signal peptide. Residues 28–1262 (APSTSQKCDE…IRNGVNRNSA (1235 aa)) lie on the Extracellular side of the membrane. Residues 35–181 (CDEPLVSGLP…IGLRIEVYGC (147 aa)) enclose the F5/8 type C domain. C35 and C181 are joined by a disulfide. Laminin G-like domains follow at residues 187 to 368 (VINF…SFSC) and 373 to 552 (TVPV…IDMC). 8 N-linked (GlcNAc...) asparagine glycosylation sites follow: N289, N346, N363, N379, N436, N506, N507, and N546. C336 and C368 are oxidised to a cystine. 4 cysteine pairs are disulfide-bonded: C520/C552, C558/C569, C563/C578, and C580/C590. The region spanning 554–591 (IIDRCVPNHCERGGKCSQTWDSFKCTCDETGYTGATCH) is the EGF-like 1 domain. One can recognise a Fibrinogen C-terminal domain in the interval 592 to 798 (NSIYEPSCEA…LRCQGDRNYW (207 aa)). N-linked (GlcNAc...) asparagine glycans are attached at residues N630 and N735. The region spanning 799–963 (NAASFPNPSS…KVTSGFISGC (165 aa)) is the Laminin G-like 3 domain. 4 disulfide bridges follow: C936/C963, C967/C980, C974/C989, and C991/C1001. The region spanning 964–1002 (SGHCTSYGTNCENGGKCLERYHGYSCDCSNTAYDGTFCN) is the EGF-like 2 domain. The Laminin G-like 4 domain occupies 1023–1214 (ATNARDSSSR…IQGELVESNC (192 aa)). N-linked (GlcNAc...) asparagine glycans are attached at residues N1116 and N1198. A disulfide bridge connects residues C1178 and C1214. Residues 1263-1283 (IIGGVIAVVIFTILCTLVFLI) traverse the membrane as a helical segment. The Cytoplasmic segment spans residues 1284–1331 (RYMFRHKGTYHTNEAKGAESAESADAAIMNNDPNFTETIDESKKEWLI). Phosphoserine is present on residues S1303 and S1306.

Belongs to the neurexin family. Interacts (via C-terminus) with KCNA2.

It localises to the membrane. Its subcellular location is the cell projection. The protein localises to the axon. It is found in the cell junction. The protein resides in the paranodal septate junction. In terms of biological role, required for gap junction formation. Required, with CNTNAP1, for radial and longitudinal organization of myelinated axons. Plays a role in the formation of functional distinct domains critical for saltatory conduction of nerve impulses in myelinated nerve fibers. Demarcates the juxtaparanodal region of the axo-glial junction. This Pongo abelii (Sumatran orangutan) protein is Contactin-associated protein-like 2 (CNTNAP2).